The chain runs to 145 residues: NADH-quinone oxidoreductase subunit A 1 (145 aa).

Transmembrane regions (helical) follow at residues isoleucine 18 to alanine 38, valine 71 to phenylalanine 91, and glycine 104 to leucine 124.

Belongs to the complex I subunit 3 family. As to quaternary structure, NDH-1 is composed of 14 different subunits. Subunits NuoA, H, J, K, L, M, N constitute the membrane sector of the complex.

The protein resides in the cell inner membrane. The catalysed reaction is a quinone + NADH + 5 H(+)(in) = a quinol + NAD(+) + 4 H(+)(out). In terms of biological role, NDH-1 shuttles electrons from NADH, via FMN and iron-sulfur (Fe-S) centers, to quinones in the respiratory chain. The immediate electron acceptor for the enzyme in this species is believed to be ubiquinone. Couples the redox reaction to proton translocation (for every two electrons transferred, four hydrogen ions are translocated across the cytoplasmic membrane), and thus conserves the redox energy in a proton gradient. This chain is NADH-quinone oxidoreductase subunit A 1, found in Geotalea uraniireducens (strain Rf4) (Geobacter uraniireducens).